A 67-amino-acid chain; its full sequence is DNA gyrase inhibitor YacG (67 aa).

Zn(2+) is bound by residues Cys10, Cys13, Cys29, and Cys33.

Belongs to the DNA gyrase inhibitor YacG family. As to quaternary structure, interacts with GyrB. Zn(2+) serves as cofactor.

In terms of biological role, inhibits all the catalytic activities of DNA gyrase by preventing its interaction with DNA. Acts by binding directly to the C-terminal domain of GyrB, which probably disrupts DNA binding by the gyrase. This chain is DNA gyrase inhibitor YacG, found in Pasteurella multocida (strain Pm70).